The chain runs to 63 residues: Sec-independent protein translocase protein TatA (63 aa).

Residues 1–21 (MGSLSMWHWLIVLVIVLLLFG) form a helical membrane-spanning segment. Positions 43-63 (MTDEDAPETAKTVDHKADETK) are disordered. The segment covering 53-63 (KTVDHKADETK) has biased composition (basic and acidic residues).

It belongs to the TatA/E family. In terms of assembly, the Tat system comprises two distinct complexes: a TatABC complex, containing multiple copies of TatA, TatB and TatC subunits, and a separate TatA complex, containing only TatA subunits. Substrates initially bind to the TatABC complex, which probably triggers association of the separate TatA complex to form the active translocon.

The protein localises to the cell inner membrane. Functionally, part of the twin-arginine translocation (Tat) system that transports large folded proteins containing a characteristic twin-arginine motif in their signal peptide across membranes. TatA could form the protein-conducting channel of the Tat system. This is Sec-independent protein translocase protein TatA from Rhizobium etli (strain ATCC 51251 / DSM 11541 / JCM 21823 / NBRC 15573 / CFN 42).